Reading from the N-terminus, the 341-residue chain is Probable electron transfer flavoprotein subunit alpha, mitochondrial (341 aa).

Residue 285 to 313 (LYIAVGIDGAIQHLAGIKDSKVIAAINRD) participates in FAD binding.

The protein belongs to the ETF alpha-subunit/FixB family. As to quaternary structure, heterodimer of an alpha and a beta subunit. FAD serves as cofactor.

The protein resides in the mitochondrion matrix. Functionally, the electron transfer flavoprotein serves as a specific electron acceptor for several dehydrogenases, including five acyl-CoA dehydrogenases, glutaryl-CoA and sarcosine dehydrogenase. It transfers the electrons to the main mitochondrial respiratory chain via ETF-ubiquinone oxidoreductase (ETF dehydrogenase). In Schizosaccharomyces pombe (strain 972 / ATCC 24843) (Fission yeast), this protein is Probable electron transfer flavoprotein subunit alpha, mitochondrial.